The chain runs to 275 residues: MEPSLLLWGILTFVVVHGHVTELCDENPPDIQHATFKALTYKTGTMLNCECKKGFRRISNGSAFMLCAGNSSHSSWENQCRCISTSPRATDGQIIPKPEEQKGKSPMGMQSQMQPTDQVNLPGHCREPPPWEHEDSRRIYHFVVGQTVHYQCMQGFRALKRGPAKSVCKTTCGKATWTQPRLQCLSERSDGWFPDDEEPQASTDAALGSDTSCPSITASTTDFQRHTEVAMTTESFVFTTEYQIAVAGCVLLLISIVLLSGLTWQRRWRKSRRTI.

The signal sequence occupies residues Met-1 to Thr-21. The region spanning Glu-22–Ser-84 is the Sushi 1 domain. Topologically, residues Glu-22–Gln-243 are extracellular. Cystine bridges form between Cys-24/Cys-67, Cys-49/Cys-80, and Cys-51/Cys-82. Asn-60 and Asn-70 each carry an N-linked (GlcNAc...) asparagine glycan. Positions Asp-91–Gln-118 are disordered. The span at Gly-108–Gln-118 shows a compositional bias: polar residues. A Sushi 2 domain is found at Gly-123–Ser-186. Cystine bridges form between Cys-125–Cys-168 and Cys-152–Cys-184. Residues Arg-188–Cys-213 are disordered. Residues Ile-244–Leu-262 form a helical membrane-spanning segment. The Cytoplasmic segment spans residues Thr-263–Ile-275.

In terms of assembly, non-covalent dimer of an alpha and a beta subunit. IL2R exists in 3 different forms: a high affinity dimer, an intermediate affinity monomer (beta subunit), and a low affinity monomer (alpha subunit). The high and intermediate affinity forms also associate with a gamma subunit.

The protein resides in the membrane. Its function is as follows. Receptor for interleukin-2. The receptor is involved in the regulation of immune tolerance by controlling regulatory T cells (TREGs) activity. TREGs suppress the activation and expansion of autoreactive T-cells. This is Interleukin-2 receptor subunit alpha (IL2RA) from Felis catus (Cat).